A 913-amino-acid chain; its full sequence is Protein translocase subunit SecA (913 aa).

Residues glutamine 87, 105–109 (GEGKT), and aspartate 512 contribute to the ATP site. Positions 897, 899, 908, and 909 each coordinate Zn(2+).

The protein belongs to the SecA family. Monomer and homodimer. Part of the essential Sec protein translocation apparatus which comprises SecA, SecYEG and auxiliary proteins SecDF-YajC and YidC. The cofactor is Zn(2+).

It localises to the cell inner membrane. The protein resides in the cytoplasm. The enzyme catalyses ATP + H2O + cellular proteinSide 1 = ADP + phosphate + cellular proteinSide 2.. Its function is as follows. Part of the Sec protein translocase complex. Interacts with the SecYEG preprotein conducting channel. Has a central role in coupling the hydrolysis of ATP to the transfer of proteins into and across the cell membrane, serving both as a receptor for the preprotein-SecB complex and as an ATP-driven molecular motor driving the stepwise translocation of polypeptide chains across the membrane. The polypeptide is Protein translocase subunit SecA (Pseudomonas savastanoi pv. phaseolicola (strain 1448A / Race 6) (Pseudomonas syringae pv. phaseolicola (strain 1448A / Race 6))).